Here is a 422-residue protein sequence, read N- to C-terminus: Cystine lyase CORI3 (422 aa).

This sequence belongs to the class-I pyridoxal-phosphate-dependent aminotransferase family. Homodimer. Pyridoxal 5'-phosphate is required as a cofactor. In terms of tissue distribution, expressed in cotyledons, sepals, pistils, flower buds, phloem companion cells and vascular tissues of petiole, leaf, filament and fruit.

It carries out the reaction L-cystine + H2O = S-sulfanyl-L-cysteine + pyruvate + NH4(+). In terms of biological role, possesses cystine lyase activity in vitro. Does not possess tyrosine aminotransferase, alanine aminotransferase, aspartate aminotransferase and tryptophan aminotransferase activities. This is Cystine lyase CORI3 from Arabidopsis thaliana (Mouse-ear cress).